Reading from the N-terminus, the 317-residue chain is Porphobilinogen deaminase (317 aa).

S-(dipyrrolylmethanemethyl)cysteine is present on C242.

It belongs to the HMBS family. In terms of assembly, monomer. Dipyrromethane serves as cofactor.

The catalysed reaction is 4 porphobilinogen + H2O = hydroxymethylbilane + 4 NH4(+). Its pathway is porphyrin-containing compound metabolism; protoporphyrin-IX biosynthesis; coproporphyrinogen-III from 5-aminolevulinate: step 2/4. Functionally, tetrapolymerization of the monopyrrole PBG into the hydroxymethylbilane pre-uroporphyrinogen in several discrete steps. This chain is Porphobilinogen deaminase, found in Colwellia psychrerythraea (strain 34H / ATCC BAA-681) (Vibrio psychroerythus).